We begin with the raw amino-acid sequence, 354 residues long: Ion-translocating oxidoreductase complex subunit D (354 aa).

5 helical membrane-spanning segments follow: residues I19–G39, F40–V60, F70–P89, Y94–G116, and A123–A143. T186 carries the post-translational modification FMN phosphoryl threonine. The next 5 membrane-spanning stretches (helical) occupy residues L215–V235, W242–F262, M266–A286, L300–P320, and D321–T341.

This sequence belongs to the NqrB/RnfD family. In terms of assembly, the complex is composed of six subunits: RnfA, RnfB, RnfC, RnfD, RnfE and RnfG. It depends on FMN as a cofactor.

Its subcellular location is the cell inner membrane. Its function is as follows. Part of a membrane-bound complex that couples electron transfer with translocation of ions across the membrane. The protein is Ion-translocating oxidoreductase complex subunit D of Mannheimia succiniciproducens (strain KCTC 0769BP / MBEL55E).